A 397-amino-acid polypeptide reads, in one-letter code: Acetate kinase (397 aa).

Asn7 contributes to the Mg(2+) binding site. Lys14 lines the ATP pocket. Arg91 contributes to the substrate binding site. Residue Asp147 is the Proton donor/acceptor of the active site. ATP-binding positions include 207–211, 282–284, and 330–334; these read HLGNG, DFR, and GLGEN. Mg(2+) is bound at residue Glu383.

The protein belongs to the acetokinase family. As to quaternary structure, homodimer. It depends on Mg(2+) as a cofactor. The cofactor is Mn(2+).

The protein resides in the cytoplasm. The enzyme catalyses acetate + ATP = acetyl phosphate + ADP. It participates in metabolic intermediate biosynthesis; acetyl-CoA biosynthesis; acetyl-CoA from acetate: step 1/2. In terms of biological role, catalyzes the formation of acetyl phosphate from acetate and ATP. Can also catalyze the reverse reaction. The chain is Acetate kinase from Moorella thermoacetica (strain ATCC 39073 / JCM 9320).